Reading from the N-terminus, the 129-residue chain is Lysozyme C (129 aa).

The 129-residue stretch at 1-129 (KVYGRCELAA…VHAWIRGCRL (129 aa)) folds into the C-type lysozyme domain. 4 disulfide bridges follow: C6–C127, C30–C115, C64–C80, and C76–C94. Active-site residues include E35 and D52.

This sequence belongs to the glycosyl hydrolase 22 family. Monomer.

The protein resides in the secreted. It catalyses the reaction Hydrolysis of (1-&gt;4)-beta-linkages between N-acetylmuramic acid and N-acetyl-D-glucosamine residues in a peptidoglycan and between N-acetyl-D-glucosamine residues in chitodextrins.. Its function is as follows. Lysozymes have primarily a bacteriolytic function; those in tissues and body fluids are associated with the monocyte-macrophage system and enhance the activity of immunoagents. The sequence is that of Lysozyme C (LYZ) from Tragopan temminckii (Temminck's tragopan).